A 181-amino-acid chain; its full sequence is MRKALLAGLLAISMMAHSSEHTFSNVQLDNMRYAYQFGEQFSKDGKYKTHKNIHKSGLGHIMAAILWQESSGGVNLKSKPKHHAYGMFQNYLPTMRARVKELGYNMTDAEIKRMLNKRSNSASWAYIELSYWLNIHKGDIRKAISSYNSGWNVKAGSKYASEVLEKANYLKNNKLLEIVND.

This is an uncharacterized protein from Enterobacteria phage T4 (Bacteriophage T4).